We begin with the raw amino-acid sequence, 561 residues long: Transcription factor Clamp (561 aa).

The segment at 127–149 adopts a C2H2-type 1 zinc-finger fold; it reads FKCDVCSDMFPHLALLNAHKRMH. Positions 129, 132, 145, and 149 each coordinate Zn(2+). Residues 290-315 are disordered; that stretch reads TGGTTPKREASSGSGHHPVKKRNSQQ. C2H2-type zinc fingers lie at residues 360–382, 388–410, 416–438, 444–466, 472–494, and 500–522; these read FSCN…KKLH, YKCS…ARIH, YKCQ…ERTH, YVCG…RRIH, YKCE…AKVH, and YKCE…RGIH.

Homodimer. Interacts with msl-2; promoting recruitment of the male-specific lethal (MSL) histone acetyltransferase complex to chromatin. Interacts with Nelf-A. Interacts with NELF-B.

The protein resides in the nucleus. Its subcellular location is the chromosome. Its function is as follows. Transcription factor involved in X-chromosome dosage compensation in males, the process by which transcription of the single X chromosome in the male is elevated. Binds to the DNA sequence (GA)n. Clamp-binding promotes nucleosome depletion and chromatin accessibility, thereby allowing access to other transcription factors. Specifically binds to cis-acting elements on the X-chromosome named chromatin entry sites and promotes recruitment of the male-specific lethal (MSL) histone acetyltransferase complex, which associates with actively transcribed genes on the male X-chromosome to upregulate their expression. Mechanistically, acts by promoting chromatin accessibility at chromatin entry sites, facilitating DNA-binding of msl-2, followed by MSL complex recruitment. In addition to dosage compensation, also involved in zygotic genome activation (ZGA), a critical event in early embryonic development during which the developmental control passes from maternally provided mRNAs to the expression of the zygotic genome after fertilization. Maternally-provided protein cooperates with Zelda (zld) to activate zygotic transcription by increasing chromatin accessibility at promoters of specific genes and facilitate zld occupancy at a subset of key embryonic promoters. Also acts as an activator of gypsy chromatin insulator function by promoting binding of Cp190 to chromatin. In Drosophila melanogaster (Fruit fly), this protein is Transcription factor Clamp.